The sequence spans 98 residues: Cell cycle protein GpsB (98 aa).

Residues 34–71 (LDLIIKDYEAFQQEIDELRQENARLKRQVEELQKRPAM) are a coiled coil.

Belongs to the GpsB family. As to quaternary structure, forms polymers through the coiled coil domains. Interacts with PBP1, MreC and EzrA.

It is found in the cytoplasm. Functionally, divisome component that associates with the complex late in its assembly, after the Z-ring is formed, and is dependent on DivIC and PBP2B for its recruitment to the divisome. Together with EzrA, is a key component of the system that regulates PBP1 localization during cell cycle progression. Its main role could be the removal of PBP1 from the cell pole after pole maturation is completed. Also contributes to the recruitment of PBP1 to the division complex. Not essential for septum formation. In Geobacillus kaustophilus (strain HTA426), this protein is Cell cycle protein GpsB.